The sequence spans 298 residues: N-acetylmuramic acid 6-phosphate etherase 2 (298 aa).

An SIS domain is found at 51–214; sequence IVSRFEQGGR…STAAMVRLGR (164 aa). Glu-79 serves as the catalytic Proton donor. The active site involves Glu-110.

Belongs to the GCKR-like family. MurNAc-6-P etherase subfamily. Homodimer.

It carries out the reaction N-acetyl-D-muramate 6-phosphate + H2O = N-acetyl-D-glucosamine 6-phosphate + (R)-lactate. It participates in amino-sugar metabolism; N-acetylmuramate degradation. Specifically catalyzes the cleavage of the D-lactyl ether substituent of MurNAc 6-phosphate, producing GlcNAc 6-phosphate and D-lactate. In Bacillus licheniformis (strain ATCC 14580 / DSM 13 / JCM 2505 / CCUG 7422 / NBRC 12200 / NCIMB 9375 / NCTC 10341 / NRRL NRS-1264 / Gibson 46), this protein is N-acetylmuramic acid 6-phosphate etherase 2.